A 418-amino-acid polypeptide reads, in one-letter code: MFRRLLIATVVGILAAFAVAGFRHAMLLLEWLFLNNDSGSLVNAATNLSPWRRLLTPALGGLAAGLLLMGWQKFTQQRPHAPTDYMEALQTDGQFDYAASLVKSLASLLVVTSGSAIGREGAMILLAALAASCFAQRFTPRQEWKLWIACGAAAGMAAAYRAPLAGSLFIAEVLFGTMMLASLGPVIISAVVALLVSNLINHSDALLYNVQLSVTVQARDYALIISTGVLAGLCGPLLLTLMNACHRGFVSLKLAPPWQLALGGVIVGLLSLFTPAVWGNGYSTVQSFLTAPPLLMIIAGIFLCKLCAVLASSGSGAPGGVFTPTLFIGLAIGMLYGRSLGLWFPDGEEITLLLGLTEMATLLAATTHAPIMSTLMICEMTGEYQLLPGLLIACVIASVISRTLHRDSIYRQHTAQHS.

A run of 10 helical transmembrane segments spans residues 5–25 (LLIA…FRHA), 54–74 (LLTP…WQKF), 146–166 (LWIA…PLAG), 168–188 (LFIA…PVII), 222–242 (ALII…LTLM), 258–278 (WQLA…PAVW), 291–311 (APPL…AVLA), 316–336 (GAPG…GMLY), 352–372 (LLLG…APIM), and 380–400 (MTGE…ASVI).

Belongs to the chloride channel (TC 2.A.49) family. ClcB subfamily.

It localises to the cell inner membrane. Functionally, probably acts as an electrical shunt for an outwardly-directed proton pump that is linked to amino acid decarboxylation, as part of the extreme acid resistance (XAR) response. The chain is Voltage-gated ClC-type chloride channel ClcB from Shigella boydii serotype 18 (strain CDC 3083-94 / BS512).